Consider the following 145-residue polypeptide: Superoxide dismutase [Mn/Fe] (145 aa).

Fe(3+) contacts are provided by His-10 and His-64. Mn(2+)-binding residues include His-10 and His-64. The tract at residues 126–145 (TSTANQDTPISEGKKPILGL) is disordered.

Belongs to the iron/manganese superoxide dismutase family. Mn(2+) is required as a cofactor. It depends on Fe(3+) as a cofactor.

The enzyme catalyses 2 superoxide + 2 H(+) = H2O2 + O2. Functionally, destroys superoxide anion radicals which are normally produced within the cells and which are toxic to biological systems. Catalyzes the dismutation of superoxide anion radicals into O2 and H2O2 by successive reduction and oxidation of the transition metal ion at the active site. This Streptococcus mitis protein is Superoxide dismutase [Mn/Fe] (sodA).